Consider the following 906-residue polypeptide: Alanine--tRNA ligase, chloroplastic/mitochondrial (906 aa).

Basic and acidic residues predominate over residues 1 to 10 (MSAATERERL). The disordered stretch occupies residues 1-22 (MSAATERERLTNANPNARGKDN). The Zn(2+) site is built by His-589, His-593, Cys-691, and His-695.

This sequence belongs to the class-II aminoacyl-tRNA synthetase family. As to quaternary structure, monomer. Zn(2+) serves as cofactor.

The protein resides in the plastid. It localises to the chloroplast. Its subcellular location is the mitochondrion. The enzyme catalyses tRNA(Ala) + L-alanine + ATP = L-alanyl-tRNA(Ala) + AMP + diphosphate. Catalyzes the attachment of alanine to tRNA(Ala) in a two-step reaction: alanine is first activated by ATP to form Ala-AMP and then transferred to the acceptor end of tRNA(Ala). Also edits incorrectly charged tRNA(Ala) via its editing domain. This chain is Alanine--tRNA ligase, chloroplastic/mitochondrial, found in Ostreococcus lucimarinus (strain CCE9901).